Reading from the N-terminus, the 211-residue chain is Small ribosomal subunit protein uS5 (211 aa).

One can recognise an S5 DRBM domain in the interval 58-121 (FEERIVKLKR…KKAHNSIHTV (64 aa)).

It belongs to the universal ribosomal protein uS5 family. In terms of assembly, part of the 30S ribosomal subunit. Contacts proteins S4 and S8.

Its function is as follows. With S4 and S12 plays an important role in translational accuracy. In terms of biological role, located at the back of the 30S subunit body where it stabilizes the conformation of the head with respect to the body. The protein is Small ribosomal subunit protein uS5 of Mycoplasma genitalium (strain ATCC 33530 / DSM 19775 / NCTC 10195 / G37) (Mycoplasmoides genitalium).